The sequence spans 303 residues: Mitochondrial basic amino acids transporter (303 aa).

6 helical membrane passes run 2-22 (ALDF…GHPF), 61-81 (GLGS…GVQG), 96-116 (FLAG…MELA), 153-172 (GMVS…FLTY), 187-207 (LLVP…WLST), and 255-275 (LLRA…VLTY). Solcar repeat units lie at residues 2–86 (ALDF…TLRA), 90–178 (DSPL…LTRA), and 185–275 (DRLL…VLTY). A disordered region spans residues 282–303 (GPEGEAVPAAPAGPALAQPSSL). Residues 284-303 (EGEAVPAAPAGPALAQPSSL) are compositionally biased toward low complexity.

Belongs to the mitochondrial carrier (TC 2.A.29) family.

It localises to the mitochondrion inner membrane. It carries out the reaction L-lysine(out) + L-arginine(in) = L-lysine(in) + L-arginine(out). It catalyses the reaction L-histidine(out) + L-arginine(in) = L-histidine(in) + L-arginine(out). The enzyme catalyses L-ornithine(in) + L-arginine(out) = L-ornithine(out) + L-arginine(in). The catalysed reaction is L-homoarginine(in) + L-arginine(out) = L-homoarginine(out) + L-arginine(in). It carries out the reaction N(omega)-methyl-L-arginine(in) + L-arginine(out) = N(omega)-methyl-L-arginine(out) + L-arginine(in). It catalyses the reaction L-arginine(in) = L-arginine(out). The enzyme catalyses L-lysine(in) = L-lysine(out). The catalysed reaction is L-ornithine(in) = L-ornithine(out). It carries out the reaction L-histidine(out) = L-histidine(in). Functionally, mitochondrial transporter of arginine, lysine, homoarginine, methylarginine and, to a much lesser extent, ornithine and histidine. Does not transport carnitine nor acylcarnitines. Functions by both counter-exchange and uniport mechanisms. Plays a physiological role in the import of basic amino acids into mitochondria for mitochondrial protein synthesis and amino acid degradation. The sequence is that of Mitochondrial basic amino acids transporter from Homo sapiens (Human).